The chain runs to 88 residues: Cell division topological specificity factor (88 aa).

The protein belongs to the MinE family.

Prevents the cell division inhibition by proteins MinC and MinD at internal division sites while permitting inhibition at polar sites. This ensures cell division at the proper site by restricting the formation of a division septum at the midpoint of the long axis of the cell. The protein is Cell division topological specificity factor of Acidovorax ebreus (strain TPSY) (Diaphorobacter sp. (strain TPSY)).